The following is a 1262-amino-acid chain: Synaptopodin-2 (1262 aa).

Residues 1 to 174 (MGTGDFICIS…PGSQEGHLVE (174 aa)) form an interaction with VPS18 region. The PDZ domain occupies 6–88 (FICISMTGGA…SLHLLIKRPT (83 aa)). 2 stretches are compositionally biased toward polar residues: residues 89–105 (SGTS…TNHQ) and 246–260 (TSLT…SSGR). Disordered regions lie at residues 89–114 (SGTS…GPME) and 239–276 (PAPE…TGLP). 3 positions are modified to phosphoserine: S304, S323, and S324. The disordered stretch occupies residues 323–363 (SSEGTEQGEDQRSGKDQGRPHKHRARHARLRRSESLSEKQV). Phosphothreonine is present on T327. Positions 331–341 (EDQRSGKDQGR) are enriched in basic and acidic residues. Basic residues predominate over residues 342–352 (PHKHRARHARL). A compositionally biased stretch (basic and acidic residues) spans 353 to 363 (RRSESLSEKQV). The Nuclear localization signal signature appears at 392-400 (KKRRRRARK). 3 interaction with ACTN2 regions span residues 477–658 (MEML…FYDS), 659–922 (SEQI…PPVA), and 899–1153 (QSPT…NIEE). Disordered regions lie at residues 503-576 (AQNE…GPQR) and 592-703 (NQTA…SPNP). Phosphoserine occurs at positions 518, 543, 544, 546, and 549. F-actin binding regions lie at residues 530 to 658 (TSYQ…FYDS) and 659 to 801 (SEQI…VTAV). Low complexity predominate over residues 540 to 552 (RMQSSVSESSFQM). The interval 554 to 560 (RSLGSVP) is interaction with YWHAB. S558 carries the post-translational modification Phosphoserine; by PKA. Polar residues-rich tracts occupy residues 558-569 (SVPQQNGFSGVS) and 592-606 (NQTA…SVTS). Residue S599 is modified to Phosphoserine. The segment at 602 to 809 (QSVTSPIPDF…AVSSIKIAQP (208 aa)) is interaction with YWHAB. The residue at position 605 (T605) is a Phosphothreonine; by PKA and CaMK2. Phosphoserine is present on S606. Composition is skewed to pro residues over residues 609 to 625 (PDFP…PPPE) and 639 to 650 (AQPPPWPQPAPW). Positions 610–621 (DFPAPPPYSAVS) are interaction with BAG3. The short motif at 614–617 (PPPY) is the PPPY motif element. Phosphotyrosine is present on Y617. S621 carries the post-translational modification Phosphoserine. Residues 659 to 914 (SEQIASRDER…LPASWKYSSN (256 aa)) form an F-actin bundling activity region. 2 positions are modified to phosphoserine: S700 and S724. 2 disordered regions span residues 741–799 (MQSS…PQVT) and 833–868 (VVSH…GMSG). The segment at 745–898 (AKQKTPPPVA…DTVQAHTVRA (154 aa)) is actin binding. Phosphothreonine is present on T749. Positions 756 to 782 (KPAVKTSSSSQPVAPVSPVWSPGVAPA) are enriched in low complexity. Phosphoserine occurs at positions 772 and 776. The segment covering 786-799 (AFSTTNPPNPPQVT) has biased composition (polar residues). Positions 808–1153 (QPTCPPARPA…EAFRPRNIEE (346 aa)) are interaction with FLNC. 3 positions are modified to phosphoserine: S900, S904, and S908. Positions 933 to 957 (LAAIKSQPPGAQASKTSKKKGKKPL) are disordered. The interval 999-1018 (PAMKQALPPRQADIGSPTNA) is interaction with ZYX. Residues S1014, S1055, and S1090 each carry the phosphoserine modification.

Belongs to the synaptopodin family. In terms of assembly, may self-associate in muscle cells under oxidative stress. Binds F-actin. Interacts with ACTN2; ACTN2 is proposed to anchor SYOP2 at Z lines in mature myocytes. Interacts with AKAP6, PPP3CA and CAMK2A. Interacts (phosphorylated form) with YWHAB; YWHAB competes with ACTN2 for interaction with SYNPO2. Interacts with KPNA2; mediating nuclear import of SYNOP2; dependent on interaction with YWHAB. Interacts with IPO13; may be implicated in SYNOP2 nuclear import. Interacts with ZYX, FLNC, ILK. Interacts with BAG3 (via WW 1 domain). May associate with the CASA complex consisting of HSPA8, HSPB8 and BAG3. Interacts with VPS18. Post-translationally, phosphorylated by PKA, and by CaMK2 at multiple sites. Dephosphorylated by calcineurin at Ser-558 and Thr-605; abrogating interaction with YWHAB and impairing nuclear import.

It is found in the nucleus. Its subcellular location is the cytoplasm. The protein localises to the cytoskeleton. The protein resides in the myofibril. It localises to the sarcomere. It is found in the z line. Its subcellular location is the cell junction. The protein localises to the focal adhesion. In terms of biological role, has an actin-binding and actin-bundling activity. Can induce the formation of F-actin networks. At the sarcomeric Z lines is proposed to act as adapter protein that links nascent myofibers to the sarcolemma via ZYX and may play a role in early assembly and stabilization of the Z lines. Involved in autophagosome formation. May play a role in chaperone-assisted selective autophagy (CASA) involved in Z lines maintenance in striated muscle under mechanical tension; may link the client-processing CASA chaperone machinery to a membrane-tethering and fusion complex providing autophagosome membranes. Involved in regulation of cell migration. May be a tumor suppressor. This is Synaptopodin-2 (Synpo2) from Rattus norvegicus (Rat).